Here is a 127-residue protein sequence, read N- to C-terminus: I-Kappa-B like protein J1 (127 aa).

2 ANK repeats span residues 43-76 (HGNT…DLDE) and 81-111 (DGDT…RFGS).

This sequence belongs to the polydnaviridae I-Kappa-B-like protein family.

Suppresses the host immune response through NF-kappa-B inactivation. Possesses ankyrin repeat domains required for NF-kappa-B binding but lacks the regulatory regions required for dissociation from NF-kappa-B and degradation. Therefore, prevents host NF-kappa-B release and subsequent activation. In Microplitis demolitor (Parasitoid wasp), this protein is I-Kappa-B like protein J1 (J2).